Here is a 165-residue protein sequence, read N- to C-terminus: Cyclic pyranopterin monophosphate synthase (165 aa).

Substrate is bound by residues 78 to 80 and 116 to 117; these read LCH and ME. Asp131 is a catalytic residue.

The protein belongs to the MoaC family. As to quaternary structure, homohexamer; trimer of dimers.

It catalyses the reaction (8S)-3',8-cyclo-7,8-dihydroguanosine 5'-triphosphate = cyclic pyranopterin phosphate + diphosphate. The protein operates within cofactor biosynthesis; molybdopterin biosynthesis. Catalyzes the conversion of (8S)-3',8-cyclo-7,8-dihydroguanosine 5'-triphosphate to cyclic pyranopterin monophosphate (cPMP). The chain is Cyclic pyranopterin monophosphate synthase from Sinorhizobium fredii (strain NBRC 101917 / NGR234).